The primary structure comprises 380 residues: MADDKEMPAAVVDGHDQVTGHIISTTIGGKNGEPKQTISYMAERVVGTGSFGIVFQAKCLETGETVAIKKVLQDRRYKNRELQLMRVMDHPNVVCLKHCFFSTTSKDELFLNLVMEYVPESLYRVLKHYSSANQRMPLVYVKLYMYQIFRGLAYIHNVAGVCHRDLKPQNLLVDPLTHQVKICDFGSAKQLVKGEANISYICSRFYRAPELIFGATEYTTSIDIWSAGCVLAELLLGQPLFPGENAVDQLVEIIKVLGTPTREEIRCMNPHYTDFRFPQIKAHPWHKIFHKRMPPEAIDFASRLLQYSPSLRCTALEACAHPFFDELREPNARLPNGRPFPPLFNFKQEVAGSSPELVNKLIPDHIKRQLGLSFLNQSGT.

One can recognise a Protein kinase domain in the interval 40 to 324 (YMAERVVGTG…ALEACAHPFF (285 aa)). Residues 46 to 54 (VGTGSFGIV) and lysine 69 each bind ATP. Threonine 104 carries the phosphothreonine modification. Serine 105 is subject to Phosphoserine. Residue aspartate 165 is the Proton acceptor of the active site. Serine 187 bears the Phosphoserine mark. Tyrosine 200 carries the post-translational modification Phosphotyrosine. A phosphothreonine mark is found at threonine 220 and threonine 261. Position 310 is a phosphoserine (serine 310). Phosphothreonine is present on threonine 314. Serine 353 bears the Phosphoserine mark.

Belongs to the protein kinase superfamily. CMGC Ser/Thr protein kinase family. GSK-3 subfamily. In terms of assembly, interacts in vitro with the C-terminal fragment of BZR1 and with BES1/BZR2, but not through the kinase domain. Interacts with BHLH150, beet curly top virus AL4/C4 and tomato golden mosaic virus AL4/AC4. Interacts with YDA. Interacts with MKK4. Interacts with KIB1 and KIB2 in a brassinosteroid (BR)-dependent manner. Interacts with BSK1, BSK6, BSK8 and BSK11. Binds to WRKY46, WRKY54 and WRKY70. Component of a complex made of POLAR, BASL, ASK7/BIN2 and ASK3/SK12. Binds to POLAR and BASL. Post-translationally, autophosphorylated mainly on threonine and serine residues. In terms of processing, ubiquitination and subsequent proteasomal degradation mediated by KIB1. In the two outer cell layers of the developing seed coat and restricted to the suspensor cells in developing embryos. Mostly expressed in stomatal lineage cells with asymmetric cell division (ACD) potential. Observed in small cells of non-protruding hypocotyl cell files and of developing cotyledon epidermis.

Its subcellular location is the cytoplasm. The protein localises to the cell cortex. It localises to the nucleus. The protein resides in the cell membrane. The catalysed reaction is L-seryl-[protein] + ATP = O-phospho-L-seryl-[protein] + ADP + H(+). The enzyme catalyses L-threonyl-[protein] + ATP = O-phospho-L-threonyl-[protein] + ADP + H(+). Inactivated by an unknown mechanism after binding of brassinosteroids to the brassinosteroid receptor complex. Inhibited by lithium. Inhibited by dephosphorylation at Tyr-200 by BSU1. Competitive inhibition by KIB1 that reduces substrate (e.g. BZR1) access. Repressed by bikinin. Its function is as follows. Negative regulator in brassinosteroid signal transduction pathway important for plant growth. May be also involved in auxin signaling pathway. Phosphorylates and increases the degradation of BZR1 and BZR2/BES1 by the proteasome. Phosphorylates BHLH150, beet curly top virus C4 and tomato golden mosaic virus AC4 on threonine and serine residues. Upon brassinosteroid signaling, inhibits stomatal development by phosphorylating and inhibiting the MAPKK kinase YDA and the MAPK kinases MKK4 and MKK5. Phosphorylates BSK1, BSK3, BSK5, BSK6, BSK8 and BSK11 in vitro. Phoyphorylates and destabilizes WRKY46, WRKY54 and WRKY70. Mediates BASL nuclear exclusion; kinase activity is required for this function. Required first at the cortical polarity site, to restrict MAPK signaling and promote asymmetric cell division (ACD), and second in the nucleus of stomatal lineage ground cells (SLGCs) or meristemoids, to limit cell division and to promote differentiation into pavement or stomatal guard cells, respectively, likely by initiating BASL polarization. Phosphorylates BASL, YDA and SPCH in vitro and POLAR in vivo. Phosphorylates and inhibits SPCH in the nucleus of SLGC undergoing ACD, thus negatively regulating stomatal development. The sequence is that of Shaggy-related protein kinase eta from Arabidopsis thaliana (Mouse-ear cress).